The sequence spans 845 residues: Proto-oncogene vav (845 aa).

The Calponin-homology (CH) domain occupies 1 to 119; the sequence is MELWRQCTHW…YTLSALSWTP (119 aa). Residues 194–373 enclose the DH domain; it reads KRCCCLREIQ…RDLAQCVNEV (180 aa). Residues 402–504 enclose the PH domain; that stretch reads RPKIDGELKI…WMEQFEMAIS (103 aa). The segment at 515-564 adopts a Phorbol-ester/DAG-type zinc-finger fold; the sequence is GHDFQMFSFEETTSCKACQMLLRGTFYQGYRCHRCRASAHKECLGRVPPC. The region spanning 592-660 is the SH3 1 domain; the sequence is LGLPKMEVFQ…PCNRVKPYVH (69 aa). One can recognise an SH2 domain in the interval 671 to 765; it reads WYAGPMERAG…SLDTTLQFPF (95 aa). Residues 782 to 842 form the SH3 2 domain; that stretch reads KYFGTAKARY…PANYVEEDYS (61 aa). Tyr-826 and Tyr-844 each carry phosphotyrosine.

As to quaternary structure, interacts with SHB. Interacts with SH2B2, GRB2, GRB3, DOCK2, SLA, TEC and ZNF655/VIK. Interacts with SIAH2; without leading to its degradation. Associates with BLNK, PLCG1, GRB2 and NCK1 in a B-cell antigen receptor-dependent fashion. Interacts with CBLB; which inhibits tyrosine phosphorylation and down-regulates activity. May interact with CCPG1. Interacts with CLNK. Interacts with THEMIS2. Interacts with NEK3 and this interaction is prolactin-dependent. Interacts with ITK. Interacts with PTK2B/PYK2. Interacts with HCK. Interacts with PTK2B/PYK2. Interacts (via SH2 domain) with SYK. Interacts with ANKRD54. Interacts with CD6. Interacts with isoform 2 of CRACR2A. Interacts with LCP2; this interaction plays a role in TCR-mediated cytokine production. In terms of processing, phosphorylated on tyrosine residues by HCK in response to IFNG and bacterial lipopolysaccharide (LPS). Phosphorylated by FYN. As to expression, widely expressed in hematopoietic cells but not in other cell types.

In terms of biological role, couples tyrosine kinase signals with the activation of the Rho/Rac GTPases, thus leading to cell differentiation and/or proliferation. This Homo sapiens (Human) protein is Proto-oncogene vav (VAV1).